Reading from the N-terminus, the 218-residue chain is Probable septum site-determining protein MinC (218 aa).

It belongs to the MinC family. As to quaternary structure, interacts with MinD and FtsZ.

Cell division inhibitor that blocks the formation of polar Z ring septums. Rapidly oscillates between the poles of the cell to destabilize FtsZ filaments that have formed before they mature into polar Z rings. Prevents FtsZ polymerization. The chain is Probable septum site-determining protein MinC from Moorella thermoacetica (strain ATCC 39073 / JCM 9320).